The following is a 658-amino-acid chain: Carnitine O-palmitoyltransferase 2, mitochondrial (658 aa).

Residues 1–25 constitute a mitochondrion transit peptide; it reads MVPRLLLRAWPRGPAVGPGAPSRPL. Topologically, residues 26-178 are mitochondrial matrix; that stretch reads SAGSGPGQYL…GLLEPEVFHL (153 aa). Lysine 69 bears the N6-succinyllysine mark. Lysine 79 is modified (N6-acetyllysine). Residue lysine 85 is modified to N6-succinyllysine. The note=Mitochondrial inner membrane intramembrane region spans 179 to 208; that stretch reads NPAKSDTDTFKRLIRFVPSSLSWYGAYLVN. Topologically, residues 209–658 are mitochondrial matrix; the sequence is AYPLDMSQYF…DALEGKSIKS (450 aa). Lysine 239 carries the post-translational modification N6-acetyllysine; alternate. Lysine 239 is subject to N6-succinyllysine; alternate. Lysine 305 bears the N6-acetyllysine mark. The Proton acceptor role is filled by histidine 372. Lysine 418 is modified (N6-acetyllysine; alternate). Lysine 418 carries the N6-succinyllysine; alternate modification. An N6-succinyllysine mark is found at lysine 424 and lysine 439. Residue 452–464 participates in CoA binding; the sequence is GKEFLKKQKLSPD. 3 residues coordinate (R)-carnitine: tyrosine 486, serine 488, and threonine 499. 2 positions are modified to N6-acetyllysine; alternate: lysine 510 and lysine 544. N6-succinyllysine; alternate occurs at positions 510 and 544.

It belongs to the carnitine/choline acetyltransferase family.

The protein resides in the mitochondrion inner membrane. The catalysed reaction is (R)-carnitine + hexadecanoyl-CoA = O-hexadecanoyl-(R)-carnitine + CoA. The enzyme catalyses octanoyl-CoA + (R)-carnitine = O-octanoyl-(R)-carnitine + CoA. It carries out the reaction decanoyl-CoA + (R)-carnitine = O-decanoyl-(R)-carnitine + CoA. It catalyses the reaction dodecanoyl-CoA + (R)-carnitine = O-dodecanoyl-R-carnitine + CoA. The catalysed reaction is tetradecanoyl-CoA + (R)-carnitine = O-tetradecanoyl-(R)-carnitine + CoA. The enzyme catalyses (R)-carnitine + octadecanoyl-CoA = O-octadecanoyl-(R)-carnitine + CoA. It carries out the reaction eicosanoyl-CoA + (R)-carnitine = O-eicosanoyl-(R)-carnitine + CoA. It catalyses the reaction (9Z)-tetradecenoyl-CoA + (R)-carnitine = O-(9Z)-tetradecenoyl-(R)-carnitine + CoA. The catalysed reaction is (5Z)-tetradecenoyl-CoA + (R)-carnitine = O-(5Z)-tetradecenoyl-(R)-carnitine + CoA. The enzyme catalyses (R)-carnitine + (9Z)-octadecenoyl-CoA = O-(9Z)-octadecenoyl-(R)-carnitine + CoA. It carries out the reaction 4,8-dimethylnonanoyl-CoA + (R)-carnitine = O-4,8-dimethylnonanoyl-(R)-carnitine + CoA. The protein operates within lipid metabolism; fatty acid beta-oxidation. Involved in the intramitochondrial synthesis of acylcarnitines from accumulated acyl-CoA metabolites. Reconverts acylcarnitines back into the respective acyl-CoA esters that can then undergo beta-oxidation, an essential step for the mitochondrial uptake of long-chain fatty acids and their subsequent beta-oxidation in the mitochondrion. Active with medium (C8-C12) and long-chain (C14-C18) acyl-CoA esters. This Macaca fascicularis (Crab-eating macaque) protein is Carnitine O-palmitoyltransferase 2, mitochondrial (CPT2).